The chain runs to 399 residues: Cell division protein FtsZ (399 aa).

GTP is bound by residues 18-22, 105-107, Glu136, Arg140, and Asp184; these read GGGVN and GTG. The segment at 311–399 is disordered; sequence GFDGGQPPSK…EELDVPDFLK (89 aa). The segment covering 388–399 has biased composition (acidic residues); sequence AAEELDVPDFLK.

The protein belongs to the FtsZ family. Homodimer. Polymerizes to form a dynamic ring structure in a strictly GTP-dependent manner. Interacts directly with several other division proteins.

Its subcellular location is the cytoplasm. In terms of biological role, essential cell division protein that forms a contractile ring structure (Z ring) at the future cell division site. The regulation of the ring assembly controls the timing and the location of cell division. One of the functions of the FtsZ ring is to recruit other cell division proteins to the septum to produce a new cell wall between the dividing cells. Binds GTP and shows GTPase activity. This chain is Cell division protein FtsZ, found in Streptomyces coelicolor (strain ATCC BAA-471 / A3(2) / M145).